We begin with the raw amino-acid sequence, 197 residues long: Large ribosomal subunit protein uL13B (197 aa).

Ser-193 carries the phosphoserine modification.

Belongs to the universal ribosomal protein uL13 family. In terms of assembly, component of the large ribosomal subunit (LSU). Mature yeast ribosomes consist of a small (40S) and a large (60S) subunit. The 40S small subunit contains 1 molecule of ribosomal RNA (18S rRNA) and at least 33 different proteins. The large 60S subunit contains 3 rRNA molecules (25S, 5.8S and 5S rRNA) and at least 46 different proteins.

It is found in the cytoplasm. In terms of biological role, component of the ribosome, a large ribonucleoprotein complex responsible for the synthesis of proteins in the cell. The small ribosomal subunit (SSU) binds messenger RNAs (mRNAs) and translates the encoded message by selecting cognate aminoacyl-transfer RNA (tRNA) molecules. The large subunit (LSU) contains the ribosomal catalytic site termed the peptidyl transferase center (PTC), which catalyzes the formation of peptide bonds, thereby polymerizing the amino acids delivered by tRNAs into a polypeptide chain. The nascent polypeptides leave the ribosome through a tunnel in the LSU and interact with protein factors that function in enzymatic processing, targeting, and the membrane insertion of nascent chains at the exit of the ribosomal tunnel. This chain is Large ribosomal subunit protein uL13B (rpl1601), found in Schizosaccharomyces pombe (strain 972 / ATCC 24843) (Fission yeast).